The primary structure comprises 311 residues: Pyrimidine-specific ribonucleoside hydrolase RihA (311 aa).

The active site involves His-240.

Belongs to the IUNH family. RihA subfamily.

Functionally, hydrolyzes cytidine or uridine to ribose and cytosine or uracil, respectively. This Salmonella gallinarum (strain 287/91 / NCTC 13346) protein is Pyrimidine-specific ribonucleoside hydrolase RihA.